Consider the following 30-residue polypeptide: AESEAGDASPLVTEVLIGSPPGYVGYTEGG.

The protein belongs to the ClpA/ClpB family.

The protein resides in the plastid. Its subcellular location is the chloroplast. In terms of biological role, may interact with a ClpP-like protease involved in degradation of denatured proteins in the chloroplast. This Pinus pinaster (Maritime pine) protein is ATP-dependent Clp protease ATP-binding subunit ClpA homolog.